The chain runs to 247 residues: 1-(5-phosphoribosyl)-5-[(5-phosphoribosylamino)methylideneamino] imidazole-4-carboxamide isomerase 1 (247 aa).

The active-site Proton acceptor is the E8. The active-site Proton donor is the D128.

It belongs to the HisA/HisF family.

It is found in the cytoplasm. It catalyses the reaction 1-(5-phospho-beta-D-ribosyl)-5-[(5-phospho-beta-D-ribosylamino)methylideneamino]imidazole-4-carboxamide = 5-[(5-phospho-1-deoxy-D-ribulos-1-ylimino)methylamino]-1-(5-phospho-beta-D-ribosyl)imidazole-4-carboxamide. It participates in amino-acid biosynthesis; L-histidine biosynthesis; L-histidine from 5-phospho-alpha-D-ribose 1-diphosphate: step 4/9. The polypeptide is 1-(5-phosphoribosyl)-5-[(5-phosphoribosylamino)methylideneamino] imidazole-4-carboxamide isomerase 1 (Ruegeria sp. (strain TM1040) (Silicibacter sp.)).